A 334-amino-acid chain; its full sequence is Lipoyl synthase (334 aa).

Residues 1–36 (MSDALIAPNASSSEAPQSPAEHYDPTRKQKSADKTA) are disordered. A compositionally biased stretch (low complexity) spans 7-20 (APNASSSEAPQSPA). Positions 21–36 (EHYDPTRKQKSADKTA) are enriched in basic and acidic residues. [4Fe-4S] cluster is bound by residues Cys81, Cys86, Cys92, Cys107, Cys111, Cys114, and Ser321. Residues 92–310 (CFGKGTATFM…EEEAYKMGFT (219 aa)) form the Radical SAM core domain.

Belongs to the radical SAM superfamily. Lipoyl synthase family. The cofactor is [4Fe-4S] cluster.

It localises to the cytoplasm. It catalyses the reaction [[Fe-S] cluster scaffold protein carrying a second [4Fe-4S](2+) cluster] + N(6)-octanoyl-L-lysyl-[protein] + 2 oxidized [2Fe-2S]-[ferredoxin] + 2 S-adenosyl-L-methionine + 4 H(+) = [[Fe-S] cluster scaffold protein] + N(6)-[(R)-dihydrolipoyl]-L-lysyl-[protein] + 4 Fe(3+) + 2 hydrogen sulfide + 2 5'-deoxyadenosine + 2 L-methionine + 2 reduced [2Fe-2S]-[ferredoxin]. The protein operates within protein modification; protein lipoylation via endogenous pathway; protein N(6)-(lipoyl)lysine from octanoyl-[acyl-carrier-protein]: step 2/2. In terms of biological role, catalyzes the radical-mediated insertion of two sulfur atoms into the C-6 and C-8 positions of the octanoyl moiety bound to the lipoyl domains of lipoate-dependent enzymes, thereby converting the octanoylated domains into lipoylated derivatives. The protein is Lipoyl synthase of Cupriavidus taiwanensis (strain DSM 17343 / BCRC 17206 / CCUG 44338 / CIP 107171 / LMG 19424 / R1) (Ralstonia taiwanensis (strain LMG 19424)).